A 315-amino-acid polypeptide reads, in one-letter code: Aspartate carbamoyltransferase catalytic subunit (315 aa).

Carbamoyl phosphate is bound by residues arginine 64 and threonine 65. Lysine 92 contributes to the L-aspartate binding site. Carbamoyl phosphate-binding residues include arginine 114, histidine 142, and glutamine 145. 2 residues coordinate L-aspartate: arginine 176 and arginine 230. The carbamoyl phosphate site is built by glycine 271 and proline 272.

This sequence belongs to the aspartate/ornithine carbamoyltransferase superfamily. ATCase family. As to quaternary structure, heterododecamer (2C3:3R2) of six catalytic PyrB chains organized as two trimers (C3), and six regulatory PyrI chains organized as three dimers (R2).

It catalyses the reaction carbamoyl phosphate + L-aspartate = N-carbamoyl-L-aspartate + phosphate + H(+). The protein operates within pyrimidine metabolism; UMP biosynthesis via de novo pathway; (S)-dihydroorotate from bicarbonate: step 2/3. Catalyzes the condensation of carbamoyl phosphate and aspartate to form carbamoyl aspartate and inorganic phosphate, the committed step in the de novo pyrimidine nucleotide biosynthesis pathway. This chain is Aspartate carbamoyltransferase catalytic subunit, found in Lawsonia intracellularis (strain PHE/MN1-00).